A 366-amino-acid chain; its full sequence is Glycine betaine monooxygenase reductase subunit (366 aa).

The FAD-binding FR-type domain occupies 16 to 119; the sequence is NGRHLVRCVK…HGPVGLFNAI (104 aa). Residues 282–366 enclose the 2Fe-2S ferredoxin-type domain; the sequence is HQVEFTATGK…VPKGDVVIDY (85 aa). [2Fe-2S] cluster contacts are provided by cysteine 316, cysteine 321, cysteine 324, and cysteine 354.

This sequence in the N-terminal section; belongs to the FAD-binding oxidoreductase type 6 family. The system is composed of an oxygenase subunit (GbcA) and a reductase subunit (GbcB). It depends on FAD as a cofactor. The cofactor is [2Fe-2S] cluster.

The enzyme catalyses glycine betaine + NADH + O2 + H(+) = N,N-dimethylglycine + formaldehyde + NAD(+) + H2O. In terms of biological role, involved in degradation of glycine betaine. Part of a Rieske-type oxygenase system that catalyzes the conversion of glycine betaine (GB) to dimethylglycine (DMG). This subunit is the ferredoxin reductase component of the system. Required for growth on choline and GB, but not for growth on DMG. This chain is Glycine betaine monooxygenase reductase subunit, found in Pseudomonas aeruginosa (strain ATCC 15692 / DSM 22644 / CIP 104116 / JCM 14847 / LMG 12228 / 1C / PRS 101 / PAO1).